The chain runs to 408 residues: Argininosuccinate synthase (408 aa).

8–16 is a binding site for ATP; that stretch reads AYSGGLDTT. Tyrosine 86 contributes to the L-citrulline binding site. Glycine 116 contacts ATP. L-aspartate is bound by residues threonine 118, asparagine 122, and aspartate 123. Residue asparagine 122 participates in L-citrulline binding. L-citrulline contacts are provided by arginine 126, serine 177, serine 186, glutamate 263, and tyrosine 275.

The protein belongs to the argininosuccinate synthase family. Type 1 subfamily. In terms of assembly, homotetramer.

The protein localises to the cytoplasm. The catalysed reaction is L-citrulline + L-aspartate + ATP = 2-(N(omega)-L-arginino)succinate + AMP + diphosphate + H(+). It participates in amino-acid biosynthesis; L-arginine biosynthesis; L-arginine from L-ornithine and carbamoyl phosphate: step 2/3. The chain is Argininosuccinate synthase from Agathobacter rectalis (strain ATCC 33656 / DSM 3377 / JCM 17463 / KCTC 5835 / VPI 0990) (Eubacterium rectale).